The chain runs to 651 residues: UvrABC system protein C (651 aa).

One can recognise a GIY-YIG domain in the interval 21 to 100; sequence TEPGCYLMRD…IKNQQPHFNV (80 aa). Residues 210–245 enclose the UVR domain; the sequence is DELRQLLNQQMERYAERLDFESAARIRDQLQGIDQL.

This sequence belongs to the UvrC family. In terms of assembly, interacts with UvrB in an incision complex.

It localises to the cytoplasm. Its function is as follows. The UvrABC repair system catalyzes the recognition and processing of DNA lesions. UvrC both incises the 5' and 3' sides of the lesion. The N-terminal half is responsible for the 3' incision and the C-terminal half is responsible for the 5' incision. The polypeptide is UvrABC system protein C (Synechococcus sp. (strain CC9311)).